The primary structure comprises 424 residues: Tyrosine--tRNA ligase (424 aa).

Tyr37 contributes to the L-tyrosine binding site. Positions 42–51 match the 'HIGH' region motif; it reads PTADSLHLGH. Tyr175 and Gln179 together coordinate L-tyrosine. Residues 235–239 carry the 'KMSKS' region motif; that stretch reads KFGKT. Residue Lys238 coordinates ATP. The S4 RNA-binding domain maps to 357 to 414; that stretch reads ADLQQALVNAELVPSRGQARTMIGSNAVAINGEKQADPEYVFTDADRLFGRYTLLRRG.

It belongs to the class-I aminoacyl-tRNA synthetase family. TyrS type 1 subfamily. Homodimer.

Its subcellular location is the cytoplasm. It catalyses the reaction tRNA(Tyr) + L-tyrosine + ATP = L-tyrosyl-tRNA(Tyr) + AMP + diphosphate + H(+). Catalyzes the attachment of tyrosine to tRNA(Tyr) in a two-step reaction: tyrosine is first activated by ATP to form Tyr-AMP and then transferred to the acceptor end of tRNA(Tyr). The protein is Tyrosine--tRNA ligase of Yersinia pestis bv. Antiqua (strain Antiqua).